We begin with the raw amino-acid sequence, 281 residues long: Probable endonuclease 4 (281 aa).

Zn(2+) contacts are provided by His69, His109, Glu145, Asp179, His182, His216, Asp229, His231, and Glu261.

Belongs to the AP endonuclease 2 family. Zn(2+) is required as a cofactor.

The catalysed reaction is Endonucleolytic cleavage to 5'-phosphooligonucleotide end-products.. Endonuclease IV plays a role in DNA repair. It cleaves phosphodiester bonds at apurinic or apyrimidinic (AP) sites, generating a 3'-hydroxyl group and a 5'-terminal sugar phosphate. The polypeptide is Probable endonuclease 4 (Buchnera aphidicola subsp. Acyrthosiphon pisum (strain APS) (Acyrthosiphon pisum symbiotic bacterium)).